Here is a 348-residue protein sequence, read N- to C-terminus: Hereditary hemochromatosis protein homolog (348 aa).

A signal peptide spans 1 to 22 (MGPRARPALFFLILLRTVAAQG). Positions 23–114 (RPPRSHSLRY…IMDNHNHSKE (92 aa)) are alpha-1. Over 23-306 (RPPRSHSLRY…WEPSLSNTLV (284 aa)) the chain is Extracellular. Residues Asn-110, Asn-130, and Asn-234 are each glycosylated (N-linked (GlcNAc...) asparagine). An alpha-2 region spans residues 115-205 (SHTLQVILGC…ELGRGVLDQQ (91 aa)). 2 disulfides stabilise this stretch: Cys-124/Cys-187 and Cys-225/Cys-282. Residues 206–297 (VPPLVKVTHH…GLDQPLTATW (92 aa)) form an alpha-3 region. One can recognise an Ig-like C1-type domain in the interval 207–296 (PPLVKVTHHV…PGLDQPLTAT (90 aa)). The segment at 298 to 306 (EPSLSNTLV) is connecting peptide. The chain crosses the membrane as a helical span at residues 307 to 330 (TGVISGIAVCVIIFFIGILFRILR). Over 331-348 (KRQASRGAMGDYVLGECE) the chain is Cytoplasmic.

The protein belongs to the MHC class I family. In terms of assembly, binds TFR through the extracellular domain in a pH-dependent manner.

Its subcellular location is the cell membrane. Functionally, binds to transferrin receptor (TFR) and reduces its affinity for iron-loaded transferrin. The polypeptide is Hereditary hemochromatosis protein homolog (HFE) (Ceratotherium simum (White rhinoceros)).